Here is an 892-residue protein sequence, read N- to C-terminus: Isoleucine--tRNA ligase (892 aa).

A 'HIGH' region motif is present at residues 60-70; the sequence is PYANGSIHIGH. Glutamate 552 contributes to the L-isoleucyl-5'-AMP binding site. The 'KMSKS' region motif lies at 593 to 597; the sequence is KMSKS. Lysine 596 is an ATP binding site. Residues cysteine 862, cysteine 865, cysteine 879, and cysteine 882 each contribute to the Zn(2+) site.

This sequence belongs to the class-I aminoacyl-tRNA synthetase family. IleS type 1 subfamily. Monomer. Requires Zn(2+) as cofactor.

It is found in the cytoplasm. It carries out the reaction tRNA(Ile) + L-isoleucine + ATP = L-isoleucyl-tRNA(Ile) + AMP + diphosphate. In terms of biological role, catalyzes the attachment of isoleucine to tRNA(Ile). As IleRS can inadvertently accommodate and process structurally similar amino acids such as valine, to avoid such errors it has two additional distinct tRNA(Ile)-dependent editing activities. One activity is designated as 'pretransfer' editing and involves the hydrolysis of activated Val-AMP. The other activity is designated 'posttransfer' editing and involves deacylation of mischarged Val-tRNA(Ile). This Mycoplasmopsis agalactiae (strain NCTC 10123 / CIP 59.7 / PG2) (Mycoplasma agalactiae) protein is Isoleucine--tRNA ligase.